Here is a 285-residue protein sequence, read N- to C-terminus: RNA polymerase sigma factor RpoH (285 aa).

A sigma-70 factor domain-2 region spans residues 53–122 (LILSHLRFVV…IHEYVLRNWR (70 aa)). Residues 77 to 80 (DLIQ) carry the Interaction with polymerase core subunit RpoC motif. The interval 229-281 (AMEGLDERSQDIIRARWLDEDNKSTLQELADRYGVSAERVRQLEKNAMKKLRA) is sigma-70 factor domain-4. The H-T-H motif DNA-binding region spans 254-273 (LQELADRYGVSAERVRQLEK).

The protein belongs to the sigma-70 factor family. RpoH subfamily. Interacts with the RNA polymerase core enzyme.

The protein localises to the cytoplasm. Its function is as follows. Sigma factors are initiation factors that promote the attachment of RNA polymerase to specific initiation sites and are then released. This sigma factor is involved in regulation of expression of heat shock genes. The polypeptide is RNA polymerase sigma factor RpoH (Enterobacter cloacae).